The sequence spans 313 residues: Myeloma-overexpressed gene protein (313 aa).

A disordered region spans residues 107–129 (ERNKGDKGAQTGAGLSQEAEDVD).

The protein is Myeloma-overexpressed gene protein (MYEOV) of Homo sapiens (Human).